A 248-amino-acid polypeptide reads, in one-letter code: UPF0246 protein MYPE6270 (248 aa).

The protein belongs to the UPF0246 family.

In Malacoplasma penetrans (strain HF-2) (Mycoplasma penetrans), this protein is UPF0246 protein MYPE6270.